Consider the following 339-residue polypeptide: Senescence-specific cysteine protease SAG39 (339 aa).

Positions 1–23 (MAMAKALLFAILGCLCLCSAVLA) are cleaved as a signal peptide. Intrachain disulfides connect cysteine 144-cysteine 187, cysteine 178-cysteine 220, and cysteine 276-cysteine 328. Residue cysteine 147 is part of the active site. Catalysis depends on residues histidine 282 and asparagine 303.

Belongs to the peptidase C1 family. Low expression in mature leaves.

The protein resides in the vacuole. Cysteine protease that may have a developmental senescence specific cell death function during apoptosis, heavy metal detoxification, and hypersensitive response. This Oryza sativa subsp. japonica (Rice) protein is Senescence-specific cysteine protease SAG39.